The primary structure comprises 675 residues: Rho guanine nucleotide exchange factor 37 (675 aa).

The segment at 1-26 (MAKHGADEPSSRSGSPDREGRASEDR) is disordered. The 184-residue stretch at 30–213 (HQRLAVRELI…QDVNTNINEY (184 aa)) folds into the DH domain. In terms of domain architecture, BAR spans 254–455 (LKQEAGLIPR…LPHHHVPEPA (202 aa)). SH3 domains lie at 506-569 (GPGK…LYHV) and 602-665 (PTMN…RARS).

Its function is as follows. May act as a guanine nucleotide exchange factor (GEF). The chain is Rho guanine nucleotide exchange factor 37 (ARHGEF37) from Homo sapiens (Human).